Here is a 108-residue protein sequence, read N- to C-terminus: Large ribosomal subunit protein bL21 (108 aa).

This sequence belongs to the bacterial ribosomal protein bL21 family. As to quaternary structure, part of the 50S ribosomal subunit. Contacts protein L20.

Functionally, this protein binds to 23S rRNA in the presence of protein L20. In Acidobacterium capsulatum (strain ATCC 51196 / DSM 11244 / BCRC 80197 / JCM 7670 / NBRC 15755 / NCIMB 13165 / 161), this protein is Large ribosomal subunit protein bL21.